The sequence spans 393 residues: MASSSKVFKKTSSNGKLSIYLGKRDFMDHVDTVEPIDGVVLVDPEYLKGRKMFVILTCAFRYGRDDLDVIGLTFRKDLYVLTQQVVPAESNSPQGPLTVLQERLLHKLGENAYPFTLQMVANLPCSVTLQPGPEDSGKACGVDFEVKSFCAENLEEKVSKRDSVRLVVRKVQFAPMEPGPGPWAQTIRRFLLSVQPLQLQAWMDKEVHYHGEPISVNVSINNSTSKVIKKIKISVDQITDVVLYSLDKYTKTVFIQEFTETIAANSSFTQSFSVTPLLSANCRRQGLALDGKLKHEDTNLASSTIVRPGMNKELLGILVSYKVRVNLMVSCGGILGDLTASDVGVELPLTLIHPKPSQETTSSEDIVIEEFARQEDGGEEKQKALAEEGDEGS.

The segment covering 371–386 has biased composition (basic and acidic residues); the sequence is FARQEDGGEEKQKALA. The tract at residues 371–393 is disordered; the sequence is FARQEDGGEEKQKALAEEGDEGS.

Belongs to the arrestin family. Homodimer; disulfide-linked in response to retinal illumination. Interacts with CXCR4; the interaction is dependent on the C-terminal phosphorylation of CXCR4 and modulates the calcium ion mobilization activity of CXCR4.

The protein localises to the photoreceptor inner segment. It is found in the cell projection. The protein resides in the cilium. Its subcellular location is the photoreceptor outer segment. Functionally, may play a role in an as yet undefined retina-specific signal transduction. Could bind to photoactivated-phosphorylated red/green opsins. In Ictidomys tridecemlineatus (Thirteen-lined ground squirrel), this protein is Arrestin-C (ARR3).